A 198-amino-acid polypeptide reads, in one-letter code: Photosystem I assembly protein Ycf4 (198 aa).

The segment at 1–20 (MTASTTINKGDSPNGDSSAS) is disordered. Transmembrane regions (helical) follow at residues 36 to 58 (YWWASIVTLGASGFFLAGISSYL) and 78 to 100 (LVMGLYGTAGLLLASYLWLVILW).

This sequence belongs to the Ycf4 family.

It localises to the cellular thylakoid membrane. Its function is as follows. Seems to be required for the assembly of the photosystem I complex. In Nostoc sp. (strain PCC 7120 / SAG 25.82 / UTEX 2576), this protein is Photosystem I assembly protein Ycf4.